The chain runs to 61 residues: Large ribosomal subunit protein eL37 (61 aa).

Cysteine 20, cysteine 23, cysteine 35, and cysteine 38 together coordinate Zn(2+). A C4-type zinc finger spans residues 20–38 (CRRCGRRAYHVRKKRCAAC).

The protein belongs to the eukaryotic ribosomal protein eL37 family. The cofactor is Zn(2+).

Its function is as follows. Binds to the 23S rRNA. In Methanocaldococcus jannaschii (strain ATCC 43067 / DSM 2661 / JAL-1 / JCM 10045 / NBRC 100440) (Methanococcus jannaschii), this protein is Large ribosomal subunit protein eL37 (rpl37e).